The primary structure comprises 1119 residues: DNA-directed RNA polymerase subunit beta (1119 aa).

The protein belongs to the RNA polymerase beta chain family. The RNAP catalytic core consists of 2 alpha, 1 beta, 1 beta' and 1 omega subunit. When a sigma factor is associated with the core the holoenzyme is formed, which can initiate transcription.

It catalyses the reaction RNA(n) + a ribonucleoside 5'-triphosphate = RNA(n+1) + diphosphate. In terms of biological role, DNA-dependent RNA polymerase catalyzes the transcription of DNA into RNA using the four ribonucleoside triphosphates as substrates. The sequence is that of DNA-directed RNA polymerase subunit beta from Thermus thermophilus (strain ATCC 27634 / DSM 579 / HB8).